The sequence spans 74 residues: Conotoxin AbVIA (74 aa).

Positions 1 to 17 are cleaved as a signal peptide; that stretch reads VLIIAVLFLTACQLTTA. Positions 18-38 are excised as a propeptide; it reads VTSSRGEQKHRALRSTDKKFK. 3 disulfide bridges follow: C43–C57, C50–C61, and C56–C68. S73 is modified (serine amide).

The protein belongs to the conotoxin O1 superfamily. Expressed by the venom duct.

The protein resides in the secreted. This is Conotoxin AbVIA from Conus abbreviatus (Abbreviated cone).